A 717-amino-acid polypeptide reads, in one-letter code: Cleavage stimulation factor subunit 3 (717 aa).

Ser-2 carries the N-acetylserine modification. HAT repeat units follow at residues 45–77 (QPID…AEIK), 79–110 (KNYD…YVRE), 117–152 (SYKE…FLKG), 163–196 (QRIT…YEEG), 221–261 (KEYE…WEKS), 271–303 (LITK…YLEQ), 319–352 (LFSD…YEES), 354–387 (MKYE…FARR), and 458–494 (NEDN…FESN). Residues 684–705 (VKRPNEDSDEDEEKGAVVPPVH) are disordered. A Phosphoserine modification is found at Ser-691.

Homodimer. The CSTF complex is composed of CSTF1 (50 kDa subunit), CSTF2 (64 kDa subunit) and CSTF3 (77 kDa subunit). CSTF3 directly interacts with CSTF1 and CSTF2. Interacts with FIP1L1.

It localises to the nucleus. In terms of biological role, one of the multiple factors required for polyadenylation and 3'-end cleavage of mammalian pre-mRNAs. The sequence is that of Cleavage stimulation factor subunit 3 (CSTF3) from Pongo abelii (Sumatran orangutan).